The chain runs to 839 residues: MSVVGIDLGFLNCYIAVARSGGIETIANEYSDRCTPACISLGSRTRAIGNAAKSQIVTNVRNTIHGFKKLHGRSFDDPIVQTERIRLPYELQKMPNGSAGVKVRYLEEERPFAIEQVTGMLLAKLKETSENALKKPVADCVISIPSFFTDAERRSVMAAAQVAGLNCLRLMNETTAVALAYGIYKQDLPPLDEKPRNVVFIDMGHSAYQVLVCAFNKGKLKVLATTFDPYLGGRNFDEALVDYFCDEFKTKYKINVKENSRALLRLYQECEKLKKLMSANASDLPLNIECFMNDLDVSSKMNRAQFEQLCASLLARVEPPLKAVMEQANLQREDISSIEIVGGATRIPAVKEQITKFFLKDISTTLNADEAVARGCALQCAILSPAFKVREFSITDLVPYSITLRWKTSFEDGSGECEVFCKNHPAPFSKVITFHKKEPFELEAFYTNLHEVPYPDARIGSFTIQNVFPQSDGDSSKVKVKVRVNIHGIFSVASASVIEKQNLEGDHSDAPMETETSFKNENKDNMDKMQVDQEEGHQKCHAEHTPEEEIDHTGAKTKSAVSDKQDRLNQTLKKGKVKSIDLPIQSSLCRQLGQDLLNSYIENEGKMIMQDKLEKERNDAKNAVEEYVYDFRDRLGTVYEKFITPEDLSKLSAVLEDTENWLYEDGEDQPKQVYVDKLQELKKYGQPIQMKYMEHEERPKALNDLGKKIQLVMKVIEAYRNKDERYDHLDPTEMEKVEKCISDAMSWLNSKMNAQNKLSLTQDPVVKVSEIVAKSKELDNFCNPIIYKPKPKAEVPEDKPKANSEHNGPMDGQSGTETKSDSTKDSSQHTKSSGEMEVD.

Ser-74 and Ser-508 each carry phosphoserine. Over residues 503-554 (LEGDHSDAPMETETSFKNENKDNMDKMQVDQEEGHQKCHAEHTPEEEIDHTG) the composition is skewed to basic and acidic residues. Residues 503–567 (LEGDHSDAPM…KSAVSDKQDR (65 aa)) are disordered. Residue Thr-545 is modified to Phosphothreonine. Position 579 is a phosphoserine (Ser-579). Phosphothreonine is present on Thr-761. The disordered stretch occupies residues 786 to 839 (IYKPKPKAEVPEDKPKANSEHNGPMDGQSGTETKSDSTKDSSQHTKSSGEMEVD). 2 stretches are compositionally biased toward basic and acidic residues: residues 791–804 (PKAEVPEDKPKANS) and 818–839 (TKSDSTKDSSQHTKSSGEMEVD).

The protein belongs to the heat shock protein 70 family. In terms of assembly, homodimer.

It is found in the cytoplasm. It localises to the nucleus. In terms of biological role, possesses chaperone activity in vitro where it inhibits aggregation of citrate synthase. In Homo sapiens (Human), this protein is Heat shock 70 kDa protein 4L (HSPA4L).